The following is a 220-amino-acid chain: Flavin-dependent thymidylate synthase (220 aa).

Residues 1–208 enclose the ThyX domain; sequence MKIDILDKGF…PWTFEAFLKY (208 aa). Residues T55, 78 to 81, and E86 contribute to the FAD site; that span reads RHRI. Residues 75-78, 86-90, and R147 each bind dUMP; these read QWFR and ELSGR. The ThyX motif signature appears at 78-88; that stretch reads RHRIASYNELS. FAD-binding positions include 163-165 and N169; that span reads NAR. R174 is a binding site for dUMP. The active-site Involved in ionization of N3 of dUMP, leading to its activation is the R174.

Belongs to the thymidylate synthase ThyX family. As to quaternary structure, homotetramer. FAD serves as cofactor.

It carries out the reaction dUMP + (6R)-5,10-methylene-5,6,7,8-tetrahydrofolate + NADPH + H(+) = dTMP + (6S)-5,6,7,8-tetrahydrofolate + NADP(+). It catalyses the reaction dUMP + formaldehyde + NADPH + H(+) = dTMP + NADP(+) + H2O. Its pathway is pyrimidine metabolism; dTTP biosynthesis. Its function is as follows. Catalyzes the reductive methylation of 2'-deoxyuridine-5'-monophosphate (dUMP or deoxyuridylate) to 2'-deoxythymidine-5'-monophosphate (dTMP or deoxythymidylate) while utilizing 5,10-methylenetetrahydrofolate (mTHF) as the methylene donor, and NAD(P)H and FADH(2) as the reductant. This reaction is a critical step in DNA biosynthesis. Can also use formaldehyde instead of mTHF as a direct methylene donor for dTMP synthesis. However, the tighter binding of ThyX to mTHF (KD of 4 uM) compared to formaldehyde (KD of 20 mM) confirms that methylene tetrahydrofolate acts as the biological carbon donor for ThyX, serving as a formaldehyde carrier/transporter and thus avoiding genotoxic effects. This chain is Flavin-dependent thymidylate synthase, found in Thermotoga maritima (strain ATCC 43589 / DSM 3109 / JCM 10099 / NBRC 100826 / MSB8).